Here is a 333-residue protein sequence, read N- to C-terminus: Salivary glue protein Sgs-3 (333 aa).

A signal peptide spans 1–23; it reads MKLTIATALVGILLIACAHVANG. The disordered stretch occupies residues 51-285; that stretch reads TCRPPTTTRC…ATARPTSKPC (235 aa). Positions 60 to 73 are enriched in pro residues; the sequence is CPPPTTTRCPPPTR. The segment covering 74 to 88 has biased composition (low complexity); that stretch reads PAECTATTKRPTARP. Basic residues predominate over residues 89–277; it reads TTKRATTRRT…TKRATTKRAT (189 aa).

This is Salivary glue protein Sgs-3 (Sgs3) from Drosophila erecta (Fruit fly).